The chain runs to 598 residues: Leucine aminopeptidase 2, chloroplastic (598 aa).

The N-terminal 71 residues, 1–71 (MATAASTSAA…GHRARMGHTA (71 aa)), are a transit peptide targeting the chloroplast. Positions 367 and 372 each coordinate Mn(2+). Lys379 is a catalytic residue. Mn(2+)-binding residues include Asp392, Asp452, and Glu454. The active site involves Arg456.

The protein belongs to the peptidase M17 family. As to quaternary structure, homohexamer (dimer of homotrimers). The cofactor is Mn(2+).

It is found in the plastid. It localises to the chloroplast. The catalysed reaction is Release of an N-terminal amino acid, Xaa-|-Yaa-, in which Xaa is preferably Leu, but may be other amino acids including Pro although not Arg or Lys, and Yaa may be Pro. Amino acid amides and methyl esters are also readily hydrolyzed, but rates on arylamides are exceedingly low.. It carries out the reaction Release of N-terminal proline from a peptide.. Presumably involved in the processing and regular turnover of intracellular proteins. Catalyzes the removal of unsubstituted N-terminal amino acids from various peptides. In Oryza sativa subsp. japonica (Rice), this protein is Leucine aminopeptidase 2, chloroplastic.